The sequence spans 592 residues: 3-hydroxy-3-methylglutaryl-coenzyme A reductase 1 (592 aa).

The tract at residues 1–45 (MDLRRRPPKPPVTNNNNSNGSFRSYQPRTSDDDHRRRATTIAPPP) is disordered. Residues 12-28 (VTNNNNSNGSFRSYQPR) show a composition bias toward polar residues. N16 and N19 each carry an N-linked (GlcNAc...) asparagine glycan. 2 consecutive transmembrane segments (helical) span residues 47–69 (ASDA…FFSV) and 97–117 (AIIA…IDFV). A linker region spans residues 118–171 (QSFISRASGDAWDLADTIDDDDHRLVTCSPPTPIVSVAKLPNPEPIVTESLPEE). The interval 172 to 592 (DEEIVKSVID…GATTTTTTTT (421 aa)) is catalytic. The active-site Charge relay system is the E265. The N-linked (GlcNAc...) asparagine glycan is linked to N329. Active-site charge relay system residues include K397 and D473. The active-site Proton donor is the H571. N-linked (GlcNAc...) asparagine glycosylation is present at N575. S577 is subject to Phosphoserine.

Belongs to the HMG-CoA reductase family. In terms of assembly, interacts (via N-terminus) with B''ALPHA and B''BETA. Inactivated by phosphorylation at Ser-577 by KIN10 activated form. Probably also phosphorylated at additional sites. Found in all tissues. Isoform Short is expressed at low levels specifically in flowers. Expressed in both the tapetum and microspores.

The protein resides in the endoplasmic reticulum membrane. The enzyme catalyses (R)-mevalonate + 2 NADP(+) + CoA = (3S)-3-hydroxy-3-methylglutaryl-CoA + 2 NADPH + 2 H(+). It participates in metabolic intermediate biosynthesis; (R)-mevalonate biosynthesis; (R)-mevalonate from acetyl-CoA: step 3/3. With respect to regulation, regulated at the post-translational level in response to alterations of sphingolipid and sterol biosynthetic pathways. Negatively regulated by a PP2A-dependent dephosphorylation occurring at a site different than Ser-577. Completely inhibited by mevinolin (IC(50) = 12.5 nM). Reversibly inactivated by phosphorylation at Ser-577 by spinach or Brassica oleracea HMGR kinases in a cell-free system. Down-regulated by KIN10 through its phosphorylation at Ser-577. Catalyzes the synthesis of mevalonate, the specific precursor of all isoprenoid compounds present in plants. This chain is 3-hydroxy-3-methylglutaryl-coenzyme A reductase 1, found in Arabidopsis thaliana (Mouse-ear cress).